The primary structure comprises 270 residues: MLQVKNLSFKYPKHQNNVLNQISFNVQDGCHLAVIGHNGSGKSTLVKLLGGFLKAKKGTIFFNDKELTSVGFNKIGILLQDPDVQLLADTLHQELIFTLENHGVLASEMDKIINEVLTVVELKDKQFTPLKKLSFGEKQRAVFACLLAVKPQIYLLDEAFSMLDNKISNKLKKFVFDTIKKQNKIVINITHDFNDLFLADEIIFLSKGSLIKKFAPEAIYEQLDLFHNHHFNLPFPLLLAHKVAKQINKKTPSLSFELNDVVNWICKHLK.

The ABC transporter domain maps to 1–232; sequence MLQVKNLSFK…LDLFHNHHFN (232 aa). 36 to 43 is a binding site for ATP; the sequence is GHNGSGKS.

It belongs to the ABC transporter superfamily.

The chain is Putative ABC transporter ATP-binding protein MG304 from Mycoplasma genitalium (strain ATCC 33530 / DSM 19775 / NCTC 10195 / G37) (Mycoplasmoides genitalium).